Here is a 267-residue protein sequence, read N- to C-terminus: Probable proteasome subunit beta type-2 (267 aa).

Residues M1–G35 constitute a propeptide, removed in mature form. T36 acts as the Nucleophile in catalysis.

The protein belongs to the peptidase T1B family. The 26S proteasome consists of a 20S proteasome core and two 19S regulatory subunits. The 20S proteasome core is composed of 28 subunits that are arranged in four stacked rings, resulting in a barrel-shaped structure. The two end rings are each formed by seven alpha subunits, and the two central rings are each formed by seven beta subunits. The catalytic chamber with the active sites is on the inside of the barrel.

The protein resides in the cytoplasm. It localises to the nucleus. The enzyme catalyses Cleavage of peptide bonds with very broad specificity.. Functionally, the proteasome is a multicatalytic proteinase complex which is characterized by its ability to cleave peptides with Arg, Phe, Tyr, Leu, and Glu adjacent to the leaving group at neutral or slightly basic pH. The proteasome has an ATP-dependent proteolytic activity (Potential). This Schizosaccharomyces pombe (strain 972 / ATCC 24843) (Fission yeast) protein is Probable proteasome subunit beta type-2 (pup1).